The sequence spans 261 residues: Sepiapterin reductase (261 aa).

N-acetylmethionine is present on methionine 1. Glycine 15–glycine 21 provides a ligand contact to NADP(+). At serine 33 the chain carries Phosphoserine. Arginine 43–serine 44 lines the NADP(+) pocket. Serine 46 is subject to Phosphoserine. Residue aspartate 70 to leucine 71 participates in NADP(+) binding. Substrate-binding positions include serine 158–leucine 159 and tyrosine 171. Lysine 175 contributes to the NADP(+) binding site. Phosphoserine is present on serine 196. Glycine 200 is a substrate binding site. Leucine 202–glutamine 207 contributes to the NADP(+) binding site. Phosphoserine is present on serine 214. Lysine 222 and aspartate 258 together coordinate substrate.

It belongs to the sepiapterin reductase family. Homodimer.

It is found in the cytoplasm. It carries out the reaction L-erythro-7,8-dihydrobiopterin + NADP(+) = L-sepiapterin + NADPH + H(+). It catalyses the reaction (6R)-L-erythro-5,6,7,8-tetrahydrobiopterin + 2 NADP(+) = 6-pyruvoyl-5,6,7,8-tetrahydropterin + 2 NADPH + 2 H(+). In terms of biological role, catalyzes the final one or two reductions in tetra-hydrobiopterin biosynthesis to form 5,6,7,8-tetrahydrobiopterin. This chain is Sepiapterin reductase (Spr), found in Mus musculus (Mouse).